Here is a 302-residue protein sequence, read N- to C-terminus: Spermidine synthase (302 aa).

Residue methionine 1 is modified to N-acetylmethionine. Residues 18–253 (EGWFRETCSL…GQIGFMLCSK (236 aa)) form the PABS domain. Position 49 (glutamine 49) interacts with S-adenosyl 3-(methylsulfanyl)propylamine. Residue tyrosine 79 participates in putrescine binding. Residues glutamine 80, aspartate 104, glutamate 124, 155-156 (DG), and aspartate 173 each bind S-adenosyl 3-(methylsulfanyl)propylamine. The Proton acceptor role is filled by aspartate 173. Residues 173 to 176 (DSSD) and tyrosine 241 contribute to the putrescine site.

The protein belongs to the spermidine/spermine synthase family. In terms of assembly, homodimer or homotetramer.

It carries out the reaction S-adenosyl 3-(methylsulfanyl)propylamine + putrescine = S-methyl-5'-thioadenosine + spermidine + H(+). It participates in amine and polyamine biosynthesis; spermidine biosynthesis; spermidine from putrescine: step 1/1. Its activity is regulated as follows. The activity is thought to be regulated mainly by the availability of decarboxylated S-adenosylmethionine. Catalyzes the production of spermidine from putrescine and decarboxylated S-adenosylmethionine (dcSAM). Has a strong preference for putrescine as substrate, and has very low activity towards 1,3-diaminopropane. Has extremely low activity towards spermidine. The protein is Spermidine synthase (Srm) of Mus musculus (Mouse).